The chain runs to 182 residues: Large ribosomal subunit protein uL5 (182 aa).

Belongs to the universal ribosomal protein uL5 family. Part of the 50S ribosomal subunit; part of the 5S rRNA/L5/L18/L25 subcomplex. Contacts the 5S rRNA and the P site tRNA. Forms a bridge to the 30S subunit in the 70S ribosome.

Its function is as follows. This is one of the proteins that bind and probably mediate the attachment of the 5S RNA into the large ribosomal subunit, where it forms part of the central protuberance. In the 70S ribosome it contacts protein S13 of the 30S subunit (bridge B1b), connecting the 2 subunits; this bridge is implicated in subunit movement. Contacts the P site tRNA; the 5S rRNA and some of its associated proteins might help stabilize positioning of ribosome-bound tRNAs. This chain is Large ribosomal subunit protein uL5, found in Thermus aquaticus.